The primary structure comprises 233 residues: Probable chemoreceptor glutamine deamidase CheD (233 aa).

Belongs to the CheD family.

The enzyme catalyses L-glutaminyl-[protein] + H2O = L-glutamyl-[protein] + NH4(+). Its function is as follows. Probably deamidates glutamine residues to glutamate on methyl-accepting chemotaxis receptors (MCPs), playing an important role in chemotaxis. In Vibrio cholerae serotype O1 (strain ATCC 39315 / El Tor Inaba N16961), this protein is Probable chemoreceptor glutamine deamidase CheD.